Reading from the N-terminus, the 872-residue chain is Alanine--tRNA ligase (872 aa).

Zn(2+) contacts are provided by His567, His571, Cys669, and His673.

This sequence belongs to the class-II aminoacyl-tRNA synthetase family. Requires Zn(2+) as cofactor.

The protein localises to the cytoplasm. The catalysed reaction is tRNA(Ala) + L-alanine + ATP = L-alanyl-tRNA(Ala) + AMP + diphosphate. Functionally, catalyzes the attachment of alanine to tRNA(Ala) in a two-step reaction: alanine is first activated by ATP to form Ala-AMP and then transferred to the acceptor end of tRNA(Ala). Also edits incorrectly charged Ser-tRNA(Ala) and Gly-tRNA(Ala) via its editing domain. This is Alanine--tRNA ligase from Streptococcus pyogenes serotype M3 (strain ATCC BAA-595 / MGAS315).